The chain runs to 231 residues: Trypsin-2 (231 aa).

The N-terminal stretch at 1 to 4 (AAFA) is a signal peptide. Positions 5 to 9 (TEDDK) are cleaved as a propeptide — activation peptide. Positions 10–229 (IVGGYECKAY…FNDWLTSTMA (220 aa)) constitute a Peptidase S1 domain. 6 disulfides stabilise this stretch: Cys16–Cys145, Cys34–Cys50, Cys118–Cys218, Cys125–Cys191, Cys156–Cys170, and Cys181–Cys205. The active-site Charge relay system is His49. Ca(2+) contacts are provided by Glu61, Asn63, Val66, and Glu71. Residue Asp93 is the Charge relay system of the active site. Catalysis depends on Ser185, which acts as the Charge relay system.

The protein belongs to the peptidase S1 family. Ca(2+) serves as cofactor.

It is found in the secreted. The protein resides in the extracellular space. It carries out the reaction Preferential cleavage: Arg-|-Xaa, Lys-|-Xaa.. This Salmo salar (Atlantic salmon) protein is Trypsin-2.